A 153-amino-acid polypeptide reads, in one-letter code: Ribosomal RNA large subunit methyltransferase H (153 aa).

Residues L75, G102, and 121–126 (LSPLTM) contribute to the S-adenosyl-L-methionine site.

The protein belongs to the RNA methyltransferase RlmH family. Homodimer.

It localises to the cytoplasm. It catalyses the reaction pseudouridine(1915) in 23S rRNA + S-adenosyl-L-methionine = N(3)-methylpseudouridine(1915) in 23S rRNA + S-adenosyl-L-homocysteine + H(+). Its function is as follows. Specifically methylates the pseudouridine at position 1915 (m3Psi1915) in 23S rRNA. This Nitratiruptor sp. (strain SB155-2) protein is Ribosomal RNA large subunit methyltransferase H.